We begin with the raw amino-acid sequence, 1177 residues long: DNA-directed RNA polymerase subunit beta (1177 aa).

Residues 1147 to 1161 (DDTEIEMRDTEDDDD) are compositionally biased toward acidic residues. Positions 1147–1177 (DDTEIEMRDTEDDDDHQSADKLNVEVETTKE) are disordered. Positions 1162–1177 (HQSADKLNVEVETTKE) are enriched in basic and acidic residues.

It belongs to the RNA polymerase beta chain family. The RNAP catalytic core consists of 2 alpha, 1 beta, 1 beta' and 1 omega subunit. When a sigma factor is associated with the core the holoenzyme is formed, which can initiate transcription.

The enzyme catalyses RNA(n) + a ribonucleoside 5'-triphosphate = RNA(n+1) + diphosphate. In terms of biological role, DNA-dependent RNA polymerase catalyzes the transcription of DNA into RNA using the four ribonucleoside triphosphates as substrates. This chain is DNA-directed RNA polymerase subunit beta, found in Bacillus anthracis (strain A0248).